A 186-amino-acid polypeptide reads, in one-letter code: Elongation factor P (186 aa).

This sequence belongs to the elongation factor P family.

The protein resides in the cytoplasm. It participates in protein biosynthesis; polypeptide chain elongation. In terms of biological role, involved in peptide bond synthesis. Stimulates efficient translation and peptide-bond synthesis on native or reconstituted 70S ribosomes in vitro. Probably functions indirectly by altering the affinity of the ribosome for aminoacyl-tRNA, thus increasing their reactivity as acceptors for peptidyl transferase. In Shewanella frigidimarina (strain NCIMB 400), this protein is Elongation factor P.